The following is a 2282-amino-acid chain: MFFATGRASAFSHPCGRTAVSLREERRIKKRKRQDGFYMLLDPKNAKPRQKSVLLSPLSQSAGCLTLSFHYTLWGQSPGAALSVLASVLGSIRKHTLFSGQPSPNWQPVSVNYSGPGQIQFTVVGVFGDVPEPAVAVDAISIAPCGESFPQCVFEDAAHPFCDWLQASEDGGRWAWTDKDMLAQERSLMRESPHTGHHYIYLEADKFSRPGQSVRLVSRPFCAPGDVCVEFSYHMYGLGEGTTLQFLLGSPAGSTPVSLWNRVGSQSPDWLNASVTIPSGHQQPMQLVFEAIRGSNTAFVVAMSFILINHGTCHVPVPPVIPIKTLVIPTEQPTVPAEGTTEPPEGTIELPEGTTKLPEETTELPEEITEPPKETTIPTEPPTVPTEPPTVPTEPPTVPTEKPTVLTEKPTVPTEETSIPTEPPTVPTEKPTVATEPPTVPTEEPTVATEKPTVPTEETTPPTTARSTLTSLEPTTHTPSTSLTSTTLSTTTTPSPTTVSCPANAHYESCACPASCKHPKASCKPPCQPGCVCDPGLVFSNNSCIKASSCPCLYNNNNYEPEAEWFSPNCTELCHCWPGGRIECQISQCKTHTKCQLKNGQYECQPYGTATCFVYGDPHYVTFDGRHFGFMGKCTYIVAQPCSKSTDSFFRVTAKNEERGQEGMSCLSRVDVTLSETVVTLLKGRRTLVGGQRVTLPAMPAKGVFLGPSGRFVELQTDFGLRVRWDGDQQLLVTVPSAYFQKLCGLCGNYDGHSSNDNLKADGQPAQSEEELGNSWQWAQDEDKECQKNQANPPSCDTALQTKMSGPQFCGQLVDSRGVFKTCLLHLKASSFFDNCVFDTCNFQGLQLMLCAHMSAVTAACQDAGYAVKPWREPQFCPLACPPNSRYSLCTSPCPKTCHTGYVGMPCPEQCLEGCECNPGFILSGLECVPSAQCGCLDPSRGYFKVGEQWFKSDCKQLCICEGSNQIRCQPWKCGPHEVCSQQSGIYGCHSQGSATCSASGDPHYLTFDGALHHFMGTCNYVLTQPCRHRPQENSFVVSATNEIRDGNLEVSLRPSCPRCRSSALKISLVKGHKVVLNGRRVALPVWPSRGQVTVRPSGNFMLLYTNFGLRVRYDGNHLVEVTVPSSYAGQLCGLCGNYNNNSLDDILGPYKRPVGNSVQLGAAWKLEEGSETGCFLQGGKPSSCHEDMGDTWNKNCEVLVNPLGPFSQCHKVVPPEVSFTSCVHGQCGTKGDSLTLCRSLQAYASLCSLAGQALAWRNSTFCPLKCPPNSSYSPCGSPCPGTCLSLNHPKDCPITLPCVEGCECQNGYILSGTSCVPLNQCGCTDFEGSYHLVRESWYTDNTCSRLCTCSLHNNITCRQTACKPGQQCWAVDGLLRCRDSGMGVCQVTGDSRYLSFDGSSHPLQGACTYVLAKVCHPNMDLPFFKVSASNEKSSAGGTNAVSLHQVYIEFSGSLVTLQKGNLVLINGTRVALPATSQIRGLNISSSRTHTIVSFWIGAQIKFDGNHVLKITIPAAYYEKVCGICGNYNGEPEDELMMPSDELAASDLEFVKSWKDNNIDPNCQKSQEGKGKPQEEQGPSGSSKKASCSPADLQKVQEQCQAALQTPAWAECASRVDLRPFLLDCMNSLCEFRGSLQPLCKALQALGAACRSKGLQPPIWRNSSFCPLACPAYSTYTNCLPSCSPSCFDPDGRCEGARAPSSCAEGCTCQPGYVLSKNKCVAKDQCSCRDAQGGSIPSGKSWVSSGCSQKCACTEGSIQCRAFHCPSRSHCKLNSNGNSNCVSEKSDQCSIFGGPHYRTFDRFSFGFRGRMTYVLIKTVDELPDGVERLLVQARNKMYPPWNKVFLQEIITTVYGYKVQLQRDLVLVVNNQKMAVPYKPEDRLRVSMQGQRLFLITDFEMVVSFDGRNAAVITLPSMYQGLVRGLCGNYDSDRRNEMMLPNGAITTNVDVFGNSWEVKTEDSVLRFRRALQVEADGKEKETGSYRSECSQEQLALVNSTQACRVLVDPQGPFAACHQTVAPEPFQEHCVSDLCASRDPKEHEELRCQVLSGYSITCQEAGIALAGWRDHTHCAMVCPANTVYQSCMTPCPESCANLAAPRDCEGPCVEGCASLPGYAFSGAQSLPLANCGCTSNGIYYQLGHSFVTADCSQRCTCASSGVLLCEPFSCRPGESCTLGNLTRGCFRESPCLRNPCQNDGRCREQGTSFTCECEPGYGGHLCTEPRDVLLPPKPDTSNLVAILLGMLVSLVVTVPVLARKCVSRKRRRWREKTQSEPRSAPGRR.

MAM domains are found at residues 1 to 147 (MFFA…PCGE) and 150 to 315 (PQCV…TCHV). Over 1–2235 (MFFATGRASA…VLLPPKPDTS (2235 aa)) the chain is Extracellular. N-linked (GlcNAc...) asparagine glycans are attached at residues N112 and N272. A 26 X approximate heptapeptide repeats (mucin-like domain) region spans residues 315 to 498 (VPVPPVIPIK…STTTTPSPTT (184 aa)). Residues 333 to 356 (PTVPAEGTTEPPEGTIELPEGTTK) show a composition bias toward low complexity. Residues 333–495 (PTVPAEGTTE…TTLSTTTTPS (163 aa)) form a disordered region. Over residues 360 to 369 (ETTELPEEIT) the composition is skewed to acidic residues. Residues 379 to 398 (TEPPTVPTEPPTVPTEPPTV) are compositionally biased toward pro residues. Composition is skewed to low complexity over residues 399 to 420 (PTEKPTVLTEKPTVPTEETSIP) and 427 to 495 (PTEK…TTPS). Residues 501–550 (CPANAHYESCACPASCKHPKASCKPPCQPGCVCDPGLVFSNNSCIKASSC) form the TIL 1 domain. N-linked (GlcNAc...) asparagine glycans are attached at residues N541 and N569. The 55-residue stretch at 551 to 605 (PCLYNNNNYEPEAEWFSPNCTELCHCWPGGRIECQISQCKTHTKCQLKNGQYECQ) folds into the VWFC 1 domain. A VWFD 1 domain is found at 610 to 787 (ATCFVYGDPH…WAQDEDKECQ (178 aa)). Intrachain disulfides connect C612–C747 and C634–C786. Residues 881 to 934 (CPPNSRYSLCTSPCPKTCHTGYVGMPCPEQCLEGCECNPGFILSGLECVPSAQC) enclose the TIL 2 domain. The VWFC 2 domain occupies 935 to 990 (GCLDPSRGYFKVGEQWFKSDCKQLCICEGSNQIRCQPWKCGPHEVCSQQSGIYGCH). The region spanning 995–1176 (ATCSASGDPH…LEEGSETGCF (182 aa)) is the VWFD 2 domain. Intrachain disulfides connect C997–C1136 and C1019–C1175. N1141, N1259, N1270, N1355, N1467, and N1483 each carry an N-linked (GlcNAc...) asparagine glycan. The 56-residue stretch at 1267–1322 (CPPNSSYSPCGSPCPGTCLSLNHPKDCPITLPCVEGCECQNGYILSGTSCVPLNQC) folds into the TIL 3 domain. Residues 1323-1379 (GCTDFEGSYHLVRESWYTDNTCSRLCTCSLHNNITCRQTACKPGQQCWAVDGLLRCR) form the VWFC 3 domain. A VWFD 3 domain is found at 1384-1564 (GVCQVTGDSR…KDNNIDPNCQ (181 aa)). 2 disulfides stabilise this stretch: C1386/C1525 and C1408/C1563. The disordered stretch occupies residues 1561-1588 (PNCQKSQEGKGKPQEEQGPSGSSKKASC). Residues 1577-1586 (QGPSGSSKKA) show a composition bias toward polar residues. N1662 carries N-linked (GlcNAc...) asparagine glycosylation. The 57-residue stretch at 1670-1726 (CPAYSTYTNCLPSCSPSCFDPDGRCEGARAPSSCAEGCTCQPGYVLSKNKCVAKDQC) folds into the TIL 4 domain. The VWFC 4 domain maps to 1727-1782 (SCRDAQGGSIPSGKSWVSSGCSQKCACTEGSIQCRAFHCPSRSHCKLNSNGNSNCV). One can recognise a VWFD 4 domain in the interval 1787–1963 (DQCSIFGGPH…SWEVKTEDSV (177 aa)). A disulfide bridge connects residues C1789 and C1926. N-linked (GlcNAc...) asparagine glycosylation occurs at N1997. In terms of domain architecture, TIL 5 spans 2076 to 2129 (CPANTVYQSCMTPCPESCANLAAPRDCEGPCVEGCASLPGYAFSGAQSLPLANC). In terms of domain architecture, VWFC 5 spans 2130–2184 (GCTSNGIYYQLGHSFVTADCSQRCTCASSGVLLCEPFSCRPGESCTLGNLTRGCF). N-linked (GlcNAc...) asparagine glycosylation occurs at N2178. An EGF-like domain is found at 2185–2221 (RESPCLRNPCQNDGRCREQGTSFTCECEPGYGGHLCT). Cystine bridges form between C2189/C2200, C2194/C2209, and C2211/C2220. The helical transmembrane segment at 2236–2256 (NLVAILLGMLVSLVVTVPVLA) threads the bilayer. At 2257-2282 (RKCVSRKRRRWREKTQSEPRSAPGRR) the chain is on the cytoplasmic side.

Probably forms covalent oligomers.

Its subcellular location is the cell membrane. Functionally, binds in a species-specific manner to the zona pellucida of the egg. May be involved in gamete recognition and/or signaling. The sequence is that of Zonadhesin (ZAN) from Oryctolagus cuniculus (Rabbit).